Here is a 150-residue protein sequence, read N- to C-terminus: 3-dehydroquinate dehydratase (150 aa).

Y26 acts as the Proton acceptor in catalysis. Residues N77, H83, and D90 each coordinate substrate. H103 serves as the catalytic Proton donor. Substrate-binding positions include 104–105 and R114; that span reads IS.

It belongs to the type-II 3-dehydroquinase family. Homododecamer.

The catalysed reaction is 3-dehydroquinate = 3-dehydroshikimate + H2O. The protein operates within metabolic intermediate biosynthesis; chorismate biosynthesis; chorismate from D-erythrose 4-phosphate and phosphoenolpyruvate: step 3/7. Its function is as follows. Catalyzes a trans-dehydration via an enolate intermediate. The polypeptide is 3-dehydroquinate dehydratase (Buchnera aphidicola subsp. Acyrthosiphon pisum (strain 5A)).